Here is a 1175-residue protein sequence, read N- to C-terminus: Structural maintenance of chromosomes protein 2-1 (1175 aa).

The Zinc-hook domain maps to 2–1161 (HIKEICLEGF…NVLFRTKFVD (1160 aa)). 32-39 (GLNGSGKS) provides a ligand contact to ATP. The stretch at 172-508 (RMYENKKEAA…AQLANFQFTY (337 aa)) forms a coiled coil. The SMC hinge domain maps to 518–638 (SKVKGVVAKL…KTTDVAKEVA (121 aa)). The stretch at 673 to 1028 (LRKLHDLAEA…ELDEKKKETL (356 aa)) forms a coiled coil.

Belongs to the SMC family. SMC2 subfamily. Forms a heterodimer with SMC4. Component of the condensin complex, which contains the SMC2 and SMC4 heterodimer, and three non SMC subunits that probably regulate the complex: CAPH, CAPD2 and CAPG. As to expression, highly expressed in roots and young floral buds.

It localises to the nucleus. Central component of the condensin complex, a complex required for conversion of interphase chromatin into mitotic-like condense chromosomes. The condensin complex probably introduces positive supercoils into relaxed DNA in the presence of type I topoisomerases and converts nicked DNA into positive knotted forms in the presence of type II topoisomerases. Also involved in chromosome segregation in meiosis. The sequence is that of Structural maintenance of chromosomes protein 2-1 (SMC2-1) from Arabidopsis thaliana (Mouse-ear cress).